We begin with the raw amino-acid sequence, 227 residues long: Calcium-binding protein 1 (227 aa).

Gly-2 carries N-myristoyl glycine lipidation. A lipid anchor (S-palmitoyl cysteine) is attached at Cys-4. 4 EF-hand domains span residues 82–117, 136–153, 159–194, and 196–227; these read EEIE…MGYM, GHVD…KLLA, IGVK…LLGH, and VGHR…MMSR. 5 residues coordinate Ca(2+): Asp-95, Asp-97, Asp-99, Tyr-101, and Asp-106. Ca(2+) contacts are provided by Asp-172, Asn-174, Asp-176, and Glu-178. Ser-180 carries the post-translational modification Phosphoserine. The Ca(2+) site is built by Glu-183, Asp-209, Asn-211, Asp-213, Arg-215, and Glu-220.

Homodimer; when bound to calcium or magnesium. Interacts (via C-terminus) with ITPR1, ITPR2 and ITPR3. This binding is calcium dependent and the interaction correlates with calcium concentration. An additional calcium-independent interaction with the N-terminus of ITPR1 results in a decreased InsP(3) binding to the receptor. Interacts with CACNA1A (via C-terminal CDB motif) in the pre- and postsynaptic membranes. Interacts with CACNA1D and CACNA1C (via C-terminal C and IQ motifs). The binding to the C motif is calcium independent whereas the binding to IQ requires the presence of calcium and is mutually exclusive with calmodulin binding. Interacts with TRPC5 (via C-terminus). Interacts (via EF-hands 1 and 2) at microtubules with MAP1LC3B. Interacts with MYO1C. Interacts (via EF-hands 1 and 2) with NSMF (via the central NLS-containing motif region), the interaction occurs in a calcium dependent manner after synaptic NMDA receptor stimulation and prevents nuclear import of NSMF. Interacts with SPACA9 homolog. In terms of processing, phosphorylated. The phosphorylation regulates the activity. In terms of tissue distribution, expressed in the inner retina, specifically in amacrine cells and in cone OFF-bipolar cells (at protein level).

In terms of biological role, modulates calcium-dependent activity of inositol 1,4,5-triphosphate receptors (ITPRs). Inhibits agonist-induced intracellular calcium signaling. Enhances inactivation and does not support calcium-dependent facilitation of voltage-dependent P/Q-type calcium channels. Causes calcium-dependent facilitation and inhibits inactivation of L-type calcium channels by binding to the same sites as calmodulin in the C-terminal domain of CACNA1C, but has an opposite effect on channel function. Suppresses the calcium-dependent inactivation of CACNA1D. Inhibits TRPC5 channels. Prevents NMDA receptor-induced cellular degeneration. Required for the normal transfer of light signals through the retina. This is Calcium-binding protein 1 (Cabp1) from Mus musculus (Mouse).